Reading from the N-terminus, the 934-residue chain is Desmocollin 2-like protein (934 aa).

Cadherin domains lie at Arg167–Phe274, Phe274–Phe381, Lys382–Phe494, and Asn495–Ile600. Topologically, residues Arg167–Gly716 are extracellular. N-linked (GlcNAc...) asparagine glycans are attached at residues Asn197, Asn296, and Asn316. 3 N-linked (GlcNAc...) asparagine glycosylation sites follow: Asn509, Asn565, and Asn569. Residues Ile717–Phe737 traverse the membrane as a helical segment. At Cys738–Lys934 the chain is on the cytoplasmic side.

As to expression, expressed at low levels in the brain and heart.

It is found in the cell junction. The protein resides in the desmosome. It localises to the cell membrane. Functionally, a component of desmosome cell-cell junctions which are required for positive regulation of cellular adhesion. Involved in the interaction of plaque proteins and intermediate filaments mediating cell-cell adhesion. Involved in the formation and structural organization of desmosome cell-cell junctions during embryonic development. Required for embryogenesis, specifically for progression of epiboly and normal convergence-extension movements during gastrulation. Required for the development of desmosomal-rich midlines in the heart. Plays an important role in ventricular contraction and resulting heart stroke volume. In Danio rerio (Zebrafish), this protein is Desmocollin 2-like protein.